We begin with the raw amino-acid sequence, 148 residues long: 1,4-dihydroxy-2-naphthoyl-CoA hydrolase (148 aa).

Aspartate 15 is a catalytic residue.

Belongs to the 4-hydroxybenzoyl-CoA thioesterase family. DHNA-CoA hydrolase subfamily.

It catalyses the reaction 1,4-dihydroxy-2-naphthoyl-CoA + H2O = 1,4-dihydroxy-2-naphthoate + CoA + H(+). It participates in cofactor biosynthesis; phylloquinone biosynthesis. It functions in the pathway quinol/quinone metabolism; 1,4-dihydroxy-2-naphthoate biosynthesis; 1,4-dihydroxy-2-naphthoate from chorismate: step 7/7. In terms of biological role, catalyzes the hydrolysis of 1,4-dihydroxy-2-naphthoyl-CoA (DHNA-CoA) to 1,4-dihydroxy-2-naphthoate (DHNA), a reaction involved in phylloquinone (vitamin K1) biosynthesis. This is 1,4-dihydroxy-2-naphthoyl-CoA hydrolase from Nostoc punctiforme (strain ATCC 29133 / PCC 73102).